We begin with the raw amino-acid sequence, 84 residues long: Small ribosomal subunit protein bS16c (84 aa).

The protein belongs to the bacterial ribosomal protein bS16 family.

The protein localises to the plastid. It localises to the chloroplast. In Anthoceros angustus (Hornwort), this protein is Small ribosomal subunit protein bS16c.